Here is a 284-residue protein sequence, read N- to C-terminus: Formamidopyrimidine-DNA glycosylase (284 aa).

P2 (schiff-base intermediate with DNA) is an active-site residue. E3 acts as the Proton donor in catalysis. Residue K61 is the Proton donor; for beta-elimination activity of the active site. Residues H95, R115, and R157 each coordinate DNA. The FPG-type zinc finger occupies 243–277 (AVYGRAGQPCRRCGTAIVREPFMNRSSFRCPACQP). The active-site Proton donor; for delta-elimination activity is the R267.

The protein belongs to the FPG family. Monomer. The cofactor is Zn(2+).

The catalysed reaction is Hydrolysis of DNA containing ring-opened 7-methylguanine residues, releasing 2,6-diamino-4-hydroxy-5-(N-methyl)formamidopyrimidine.. It carries out the reaction 2'-deoxyribonucleotide-(2'-deoxyribose 5'-phosphate)-2'-deoxyribonucleotide-DNA = a 3'-end 2'-deoxyribonucleotide-(2,3-dehydro-2,3-deoxyribose 5'-phosphate)-DNA + a 5'-end 5'-phospho-2'-deoxyribonucleoside-DNA + H(+). Functionally, involved in base excision repair of DNA damaged by oxidation or by mutagenic agents. Acts as a DNA glycosylase that recognizes and removes damaged bases. Has a preference for oxidized purines, such as 7,8-dihydro-8-oxoguanine (8-oxoG). Has AP (apurinic/apyrimidinic) lyase activity and introduces nicks in the DNA strand. Cleaves the DNA backbone by beta-delta elimination to generate a single-strand break at the site of the removed base with both 3'- and 5'-phosphates. The polypeptide is Formamidopyrimidine-DNA glycosylase (Acidothermus cellulolyticus (strain ATCC 43068 / DSM 8971 / 11B)).